A 179-amino-acid chain; its full sequence is Lipoprotein signal peptidase (179 aa).

4 helical membrane-spanning segments follow: residues 10 to 30, 48 to 68, 75 to 95, and 101 to 121; these read LFQF…AIII, VPVL…AFSF, WQHY…IFWL, and NAMI…GNLI. Catalysis depends on residues Asp131 and Asp149. Residues 141 to 161 form a helical membrane-spanning segment; sequence HFPAFNIADSAITIGTILLLI.

This sequence belongs to the peptidase A8 family.

Its subcellular location is the cell inner membrane. The enzyme catalyses Release of signal peptides from bacterial membrane prolipoproteins. Hydrolyzes -Xaa-Yaa-Zaa-|-(S,diacylglyceryl)Cys-, in which Xaa is hydrophobic (preferably Leu), and Yaa (Ala or Ser) and Zaa (Gly or Ala) have small, neutral side chains.. The protein operates within protein modification; lipoprotein biosynthesis (signal peptide cleavage). This protein specifically catalyzes the removal of signal peptides from prolipoproteins. The polypeptide is Lipoprotein signal peptidase (Acinetobacter baylyi (strain ATCC 33305 / BD413 / ADP1)).